Consider the following 257-residue polypeptide: Transmembrane protein 101 (257 aa).

The next 8 membrane-spanning stretches (helical) occupy residues 21-40 (VLLT…LYAE), 52-72 (VPYL…MSFG), 77-97 (WFAL…YVGG), 110-130 (YSRT…AGEL), 139-159 (SLQS…AYSL), 182-202 (LFFV…YVTL), 206-226 (ILAV…AYWH), and 233-253 (FWNQ…AVIL).

It is found in the membrane. Functionally, may activate NF-kappa-B signaling pathways. The polypeptide is Transmembrane protein 101 (TMEM101) (Bos taurus (Bovine)).